Here is a 199-residue protein sequence, read N- to C-terminus: Recombination protein RecR (199 aa).

The C4-type zinc-finger motif lies at 57–72; sequence CQSCRTYTEETLCPIC. The region spanning 81–176 is the Toprim domain; it reads STICVVETPA…MISRIAHGVP (96 aa).

This sequence belongs to the RecR family.

Functionally, may play a role in DNA repair. It seems to be involved in an RecBC-independent recombinational process of DNA repair. It may act with RecF and RecO. This Shewanella baltica (strain OS195) protein is Recombination protein RecR.